The chain runs to 265 residues: Ribosomal RNA small subunit methyltransferase A (265 aa).

Residues Asn-13, Leu-15, Gly-39, Glu-59, Asp-87, and Asn-108 each coordinate S-adenosyl-L-methionine.

It belongs to the class I-like SAM-binding methyltransferase superfamily. rRNA adenine N(6)-methyltransferase family. RsmA subfamily.

It is found in the cytoplasm. The enzyme catalyses adenosine(1518)/adenosine(1519) in 16S rRNA + 4 S-adenosyl-L-methionine = N(6)-dimethyladenosine(1518)/N(6)-dimethyladenosine(1519) in 16S rRNA + 4 S-adenosyl-L-homocysteine + 4 H(+). Its function is as follows. Specifically dimethylates two adjacent adenosines (A1518 and A1519) in the loop of a conserved hairpin near the 3'-end of 16S rRNA in the 30S particle. May play a critical role in biogenesis of 30S subunits. The sequence is that of Ribosomal RNA small subunit methyltransferase A from Aliarcobacter butzleri (strain RM4018) (Arcobacter butzleri).